A 325-amino-acid chain; its full sequence is MKVFDYEDVQLIPNKCIVNSRSECDTTVTLGKHSFKMPVVPANMQTIIDETIAETLAENGYFYIMHRFDEEARVPFIKKMQQKGLITSISVGVKEGEYAFVETLAREGLVPDYVTIDIAHGHSNAVINMIQHLKKSLPETFVIAGNVGTPEAVRELENAGADATKVGIGPGKVCITKIKTGFGTGGWQLAALRWCAKAARKPIIADGGIRTHGDIAKSVRFGATMVMIGSLFAGHEESPGETKVEDGVVYKEYFGSASEFQKGEKKNVEGKKIWLRHKGKLADTLVEMQQDLQSSISYAGGRDLEAIRKVDYVIVKNSIFNGDTI.

Catalysis depends on C174, which acts as the Thioimidate intermediate. 203–226 (IIADGGIRTHGDIAKSVRFGATMV) is an NADP(+) binding site.

It belongs to the IMPDH/GMPR family. GuaC type 2 subfamily.

It carries out the reaction IMP + NH4(+) + NADP(+) = GMP + NADPH + 2 H(+). In terms of biological role, catalyzes the irreversible NADPH-dependent deamination of GMP to IMP. It functions in the conversion of nucleobase, nucleoside and nucleotide derivatives of G to A nucleotides, and in maintaining the intracellular balance of A and G nucleotides. This Enterococcus faecalis (strain ATCC 700802 / V583) protein is GMP reductase.